A 173-amino-acid polypeptide reads, in one-letter code: Translation initiation factor IF-3 (173 aa).

It belongs to the IF-3 family. In terms of assembly, monomer.

Its subcellular location is the cytoplasm. Functionally, IF-3 binds to the 30S ribosomal subunit and shifts the equilibrium between 70S ribosomes and their 50S and 30S subunits in favor of the free subunits, thus enhancing the availability of 30S subunits on which protein synthesis initiation begins. This Clostridium tetani (strain Massachusetts / E88) protein is Translation initiation factor IF-3.